Reading from the N-terminus, the 137-residue chain is Probable disulfide formation protein C (137 aa).

The helical transmembrane segment at 6 to 25 (ENLMLGSWLTALTAMLGSLY) threads the bilayer. Cysteine 35 and cysteine 38 are oxidised to a cystine. 2 helical membrane passes run 40 to 59 (YQRIIMYPLVLILFIGYLKR) and 66 to 83 (YSLWFSLIGMFTSLYHYS). Cysteine 97 and cysteine 102 are disulfide-bonded. The helical transmembrane segment at 111–133 (GFVTIPFLAFTAFVIIFICSLLI) threads the bilayer.

This sequence belongs to the DsbB family. BdbC subfamily.

Its subcellular location is the cell membrane. Required for disulfide bond formation in some proteins. The protein is Probable disulfide formation protein C of Halalkalibacterium halodurans (strain ATCC BAA-125 / DSM 18197 / FERM 7344 / JCM 9153 / C-125) (Bacillus halodurans).